A 228-amino-acid chain; its full sequence is Putative N-acetylmannosamine-6-phosphate 2-epimerase (228 aa).

Belongs to the NanE family.

It catalyses the reaction an N-acyl-D-glucosamine 6-phosphate = an N-acyl-D-mannosamine 6-phosphate. The protein operates within amino-sugar metabolism; N-acetylneuraminate degradation; D-fructose 6-phosphate from N-acetylneuraminate: step 3/5. Its function is as follows. Converts N-acetylmannosamine-6-phosphate (ManNAc-6-P) to N-acetylglucosamine-6-phosphate (GlcNAc-6-P). This Thermosynechococcus vestitus (strain NIES-2133 / IAM M-273 / BP-1) protein is Putative N-acetylmannosamine-6-phosphate 2-epimerase.